The chain runs to 463 residues: Lactadherin (463 aa).

The first 22 residues, 1 to 22 (MQVSRVLAALCGMLLCASGLFA), serve as a signal peptide directing secretion. EGF-like domains lie at 24–61 (SGDFCDSSLCLNGGTCLTGQDNDIYCLCPEGFTGLVCN) and 64–108 (ERGP…IHCE). Disulfide bonds link Cys28–Cys39, Cys33–Cys49, and Cys51–Cys60. Asn61 carries an N-linked (GlcNAc...) asparagine glycan. 6 disulfide bridges follow: Cys68–Cys79, Cys73–Cys96, Cys98–Cys107, Cys148–Cys303, Cys290–Cys294, and Cys308–Cys463. A Cell attachment site motif is present at residues 87-89 (RGD). F5/8 type C domains follow at residues 148–303 (CSTQ…LLGC) and 308–463 (CSEP…LLGC). Asn266 carries N-linked (GlcNAc...) asparagine glycosylation. N-linked (GlcNAc...) asparagine glycans are attached at residues Asn316 and Asn426.

Post-translationally, N-glycosylated. Isoform 1 also exists in both an O-glycosylated and a non-O-glycosylated form. Mammary epithelial cell surfaces and spermatozoan. Isoform 2 is present in brain, heart, kidney and spleen and at low levels in lung, liver, small intestine and testis.

The protein localises to the membrane. Its subcellular location is the secreted. The protein resides in the cytoplasmic vesicle. It localises to the secretory vesicle. It is found in the acrosome membrane. Functionally, contributes to phagocytic removal of apoptotic cells in many tissues. Specific ligand for the alpha-v/beta-3 and alpha-v/beta-5 receptors. Also binds to phosphatidylserine-enriched cell surfaces in a receptor-independent manner. Zona pellucida-binding protein which may play a role in gamete interaction. Plays an important role in the maintenance of intestinal epithelial homeostasis and the promotion of mucosal healing. Promotes VEGF-dependent neovascularization. This is Lactadherin (Mfge8) from Mus musculus (Mouse).